The following is a 233-amino-acid chain: Homeobox protein ceh-30 (233 aa).

Residues 50-85 show a composition bias toward polar residues; it reads NNSTYSHDLDPSPQSVRSDLSTSPRASSPDRNSPMS. 2 disordered regions span residues 50–93 and 206–233; these read NNST…KART and FQATSSSNSPSTHKSSESPQLDVSSNSD. Residues 88 to 147 constitute a DNA-binding region (homeobox); that stretch reads SRKARTIFTDKQLQELENTFEKQKYLSVQDRMDLAHRMGLSDTQVKTWYQNRRTKWKRQA. Residues 224–233 are compositionally biased toward polar residues; it reads PQLDVSSNSD.

It is found in the nucleus. In terms of biological role, cell-type specific anti-apoptotic transcription factor required for the sexually dimorphic survival of the male-specific CEM (cephalic male) sensory neurons during sex determination. In hermaphrodites, the homologous cells undergo programmed cell death due to transcriptional repression of ceh-30 by tra-1, the terminal regulator in the sex determination pathway. The protein is Homeobox protein ceh-30 of Caenorhabditis briggsae.